Reading from the N-terminus, the 370-residue chain is ATP synthase gamma chain, chloroplastic (370 aa).

Residues 1 to 55 (MKFFCVAGLLASAAAFQAQPAAFTTYSPAVGGATSNVFSESSSPAHRNRRATIVM) constitute a chloroplast transit peptide. The active site involves Cys-145.

It belongs to the ATPase gamma chain family. F-type ATPases have 2 components, CF(1) - the catalytic core - and CF(0) - the membrane proton channel. CF(1) has five subunits: alpha(3), beta(3), gamma(1), delta(1), epsilon(1). CF(0) has four main subunits: a, b, b' and c.

It is found in the plastid. It localises to the chloroplast thylakoid membrane. Functionally, produces ATP from ADP in the presence of a proton gradient across the membrane. The gamma chain is believed to be important in regulating ATPase activity and the flow of protons through the CF(0) complex. This is ATP synthase gamma chain, chloroplastic (ATPC) from Trieres chinensis (Marine centric diatom).